Consider the following 224-residue polypeptide: 7-cyano-7-deazaguanine synthase (224 aa).

L10–V20 is a binding site for ATP. Residues C189, C199, C202, and C205 each contribute to the Zn(2+) site.

The protein belongs to the QueC family. Zn(2+) serves as cofactor.

The enzyme catalyses 7-carboxy-7-deazaguanine + NH4(+) + ATP = 7-cyano-7-deazaguanine + ADP + phosphate + H2O + H(+). The protein operates within purine metabolism; 7-cyano-7-deazaguanine biosynthesis. Functionally, catalyzes the ATP-dependent conversion of 7-carboxy-7-deazaguanine (CDG) to 7-cyano-7-deazaguanine (preQ(0)). The chain is 7-cyano-7-deazaguanine synthase from Stutzerimonas stutzeri (strain A1501) (Pseudomonas stutzeri).